A 159-amino-acid polypeptide reads, in one-letter code: Secreted RxLR effector protein 50 (159 aa).

The first 19 residues, 1–19 (MRSSTVLYVLGAAILAVNG), serve as a signal peptide directing secretion. A RxLR-dEER motif is present at residues 38–54 (RWLRSNAMEHETDDEER).

This sequence belongs to the RxLR effector family.

It is found in the secreted. Its subcellular location is the host nucleus. The protein localises to the host cytoplasm. In terms of biological role, secreted effector that completely suppresses the host cell death induced by cell death-inducing proteins. In Plasmopara viticola (Downy mildew of grapevine), this protein is Secreted RxLR effector protein 50.